A 257-amino-acid chain; its full sequence is MSVPLILTLLAGAATFIGAFLGVLGQKPSNRMLAFSLGFAAGIMLLISLMEMLPAALDTEGMSPVLGYGMFIIGLLGYFGLDRLLPHAHPQDLVQKRQQPLPGSIKRTAILLTLGISLHNFPEGIATFVTASSNLELGFGIALAVALHNIPEGLAVAGPVYAATGSKRTAIFWAGISGMAEILGGVLAWLILGSLVSPIVMAAIMAAVAGIMVALSVDELMPLAKEIDPNNNPSYGVLCGMSIMGLSLVILQTIGIG.

The next 8 helical transmembrane spans lie at 5–25, 33–53, 61–81, 109–129, 137–157, 171–191, 195–215, and 236–256; these read LILT…GVLG, LAFS…MEML, GMSP…YFGL, AILL…ATFV, LGFG…LAVA, IFWA…AWLI, LVSP…MVAL, and GVLC…TIGI. Residues Asn-120 and Glu-123 each coordinate Fe(2+). Zn(2+) contacts are provided by Glu-123 and His-148. Positions 149, 152, and 181 each coordinate Fe(2+). Glu-152 is a Zn(2+) binding site.

This sequence belongs to the ZIP transporter (TC 2.A.5) family. ZupT subfamily.

The protein resides in the cell inner membrane. It carries out the reaction Zn(2+)(in) = Zn(2+)(out). In terms of biological role, mediates zinc uptake. May also transport other divalent cations. This is Zinc transporter ZupT from Salmonella paratyphi A (strain ATCC 9150 / SARB42).